Consider the following 275-residue polypeptide: Undecaprenyl-diphosphatase 2 (275 aa).

Transmembrane regions (helical) follow at residues 48–68, 90–110, 117–137, 154–174, 195–215, 223–243, and 254–274; these read NAYV…ALLF, GLTL…GLLF, IFHV…MIAA, ISYK…WPGF, ANFT…LSLI, ISLL…SLVV, and IKLV…LFLF.

Belongs to the UppP family.

It localises to the cell membrane. The enzyme catalyses di-trans,octa-cis-undecaprenyl diphosphate + H2O = di-trans,octa-cis-undecaprenyl phosphate + phosphate + H(+). In terms of biological role, catalyzes the dephosphorylation of undecaprenyl diphosphate (UPP). Confers resistance to bacitracin. This is Undecaprenyl-diphosphatase 2 from Shouchella clausii (strain KSM-K16) (Alkalihalobacillus clausii).